The following is a 147-amino-acid chain: Acidic phospholipase A2 S3-24 (147 aa).

The first 19 residues, 1–19 (MYPAHLLVLLAVCVSLLGA), serve as a signal peptide directing secretion. Positions 20-27 (SDMPPQPL) are excised as a propeptide. Intrachain disulfides connect C38/C99, C54/C146, C56/C72, C71/C127, C78/C120, C88/C113, and C106/C118. The Ca(2+) site is built by Y55, G57, and G59. Residue H75 is part of the active site. D76 contacts Ca(2+). D121 is an active-site residue.

The protein belongs to the phospholipase A2 family. Group I subfamily. D49 sub-subfamily. Ca(2+) serves as cofactor. In terms of tissue distribution, expressed by the venom gland.

The protein resides in the secreted. The catalysed reaction is a 1,2-diacyl-sn-glycero-3-phosphocholine + H2O = a 1-acyl-sn-glycero-3-phosphocholine + a fatty acid + H(+). Its function is as follows. Snake venom phospholipase A2 (PLA2) that inhibits collagen-induced platelet aggregation. PLA2 catalyzes the calcium-dependent hydrolysis of the 2-acyl groups in 3-sn-phosphoglycerides. The polypeptide is Acidic phospholipase A2 S3-24 (Austrelaps superbus (Lowland copperhead snake)).